We begin with the raw amino-acid sequence, 168 residues long: Large ribosomal subunit protein bL17 (168 aa).

A disordered region spans residues 124–168 (QATGEAEAATKRAAKDAEGSAEVSEAKVDTTKADDEAAAEESKDA). Residues 131 to 168 (AATKRAAKDAEGSAEVSEAKVDTTKADDEAAAEESKDA) are compositionally biased toward basic and acidic residues.

The protein belongs to the bacterial ribosomal protein bL17 family. In terms of assembly, part of the 50S ribosomal subunit. Contacts protein L32.

This is Large ribosomal subunit protein bL17 from Streptomyces coelicolor (strain ATCC BAA-471 / A3(2) / M145).